Here is a 171-residue protein sequence, read N- to C-terminus: LIM domain transcription factor LMO4-B (171 aa).

A compositionally biased stretch (polar residues) spans 1–19 (MVNNRISESTTTAVSNNGS). The segment at 1–20 (MVNNRISESTTTAVSNNGSP) is disordered. LIM zinc-binding domains are found at residues 22-84 (KACA…LFGN) and 86-148 (GACN…GLLN).

In terms of biological role, acts as a positive cofactor of GATA transcription factors to establish the identity of the ventral mesoderm during gastrulation. Down-regulation in the dorsal mesoderm is necessary for the proper formation of this territory since, when present, lmo4 may bind ldb1 and restrict the availability of this cofactor for Spemman organizer transcription factors. At neurula stages, suppresses primary neuron differentiation and modulates gene expression at the Isthmic Organizer of the midbrain-hindbrain boundary. The chain is LIM domain transcription factor LMO4-B (lmo4-b) from Xenopus laevis (African clawed frog).